Here is a 322-residue protein sequence, read N- to C-terminus: HPr kinase/phosphorylase (322 aa).

Active-site residues include H146 and K167. 161–168 contacts ATP; that stretch reads GDSGLGKS. Mg(2+) is bound at residue S168. D185 serves as the catalytic Proton acceptor; for phosphorylation activity. Proton donor; for dephosphorylation activity. The important for the catalytic mechanism of both phosphorylation and dephosphorylation stretch occupies residues 209 to 218; it reads LEVRGLGLLD. Position 210 (E210) interacts with Mg(2+). R250 is a catalytic residue. An important for the catalytic mechanism of dephosphorylation region spans residues 271 to 276; that stretch reads QVAAGR.

Belongs to the HPrK/P family. As to quaternary structure, homohexamer. The cofactor is Mg(2+).

The catalysed reaction is [HPr protein]-L-serine + ATP = [HPr protein]-O-phospho-L-serine + ADP + H(+). It catalyses the reaction [HPr protein]-O-phospho-L-serine + phosphate + H(+) = [HPr protein]-L-serine + diphosphate. Catalyzes the ATP- as well as the pyrophosphate-dependent phosphorylation of a specific serine residue in HPr, a phosphocarrier protein of the phosphoenolpyruvate-dependent sugar phosphotransferase system (PTS). HprK/P also catalyzes the pyrophosphate-producing, inorganic phosphate-dependent dephosphorylation (phosphorolysis) of seryl-phosphorylated HPr (P-Ser-HPr). The chain is HPr kinase/phosphorylase from Paraburkholderia phymatum (strain DSM 17167 / CIP 108236 / LMG 21445 / STM815) (Burkholderia phymatum).